We begin with the raw amino-acid sequence, 434 residues long: Sulfide-quinone reductase (434 aa).

FAD-binding positions include 8-12, 34-35, and 77-78; these read GAGTG and SA. Cys-160 serves as the catalytic Cysteine persulfide intermediate. FAD is bound by residues Ile-302 and Gly-322. Cys-356 (cysteine persulfide intermediate) is an active-site residue. Lys-391 lines the FAD pocket.

The protein belongs to the SQRD family. Homodimer. It depends on FAD as a cofactor.

The protein resides in the membrane. The enzyme catalyses n a quinone + n hydrogen sulfide + n H(+) = polysulfur(n-2) + n a quinol. Catalyzes the oxidation of hydrogen sulfide, with the help of a quinone. Consecutive reaction cycles lead to the accumulation of a polysulfide product on the active site Cys residues; these products are released when they exceed a critical length, typically as cyclooctasulfur. In Acidithiobacillus ferrooxidans (strain ATCC 23270 / DSM 14882 / CIP 104768 / NCIMB 8455) (Ferrobacillus ferrooxidans (strain ATCC 23270)), this protein is Sulfide-quinone reductase.